The chain runs to 232 residues: Enolase-phosphatase E1 (232 aa).

Belongs to the HAD-like hydrolase superfamily. MasA/MtnC family. Monomer. The cofactor is Mg(2+).

The catalysed reaction is 5-methylsulfanyl-2,3-dioxopentyl phosphate + H2O = 1,2-dihydroxy-5-(methylsulfanyl)pent-1-en-3-one + phosphate. It participates in amino-acid biosynthesis; L-methionine biosynthesis via salvage pathway; L-methionine from S-methyl-5-thio-alpha-D-ribose 1-phosphate: step 3/6. Its pathway is amino-acid biosynthesis; L-methionine biosynthesis via salvage pathway; L-methionine from S-methyl-5-thio-alpha-D-ribose 1-phosphate: step 4/6. Functionally, bifunctional enzyme that catalyzes the enolization of 2,3-diketo-5-methylthiopentyl-1-phosphate (DK-MTP-1-P) into the intermediate 2-hydroxy-3-keto-5-methylthiopentenyl-1-phosphate (HK-MTPenyl-1-P), which is then dephosphorylated to form the acireductone 1,2-dihydroxy-3-keto-5-methylthiopentene (DHK-MTPene). The sequence is that of Enolase-phosphatase E1 from Nocardia farcinica (strain IFM 10152).